A 143-amino-acid polypeptide reads, in one-letter code: Putative pre-16S rRNA nuclease (143 aa).

The protein belongs to the YqgF nuclease family.

The protein localises to the cytoplasm. In terms of biological role, could be a nuclease involved in processing of the 5'-end of pre-16S rRNA. This is Putative pre-16S rRNA nuclease from Mesomycoplasma hyopneumoniae (strain 232) (Mycoplasma hyopneumoniae).